Consider the following 521-residue polypeptide: Leucine-rich repeat-containing protein 24 (521 aa).

The N-terminal stretch at Met-1–Gly-23 is a signal peptide. Residues Leu-24–Pro-58 form the LRRNT domain. LRR repeat units follow at residues Gly-59–Pro-80, Ala-83–Ala-104, Arg-107–Gly-128, Gln-131–His-152, Arg-155–Gly-176, and Ser-179–Pro-200. N-linked (GlcNAc...) asparagine glycosylation is present at Asn-91. The 56-residue stretch at Asn-212–Pro-267 folds into the LRRCT domain. In terms of domain architecture, Ig-like C2-type spans Pro-268–Asn-371. Residues Cys-289 and Cys-353 are joined by a disulfide bond. Residues Gln-306 to Thr-330 are disordered. 2 N-linked (GlcNAc...) asparagine glycosylation sites follow: Asn-342 and Asn-371. The segment at Arg-374–Pro-395 is disordered. A helical transmembrane segment spans residues Ala-414–Cys-434.

Its subcellular location is the membrane. The chain is Leucine-rich repeat-containing protein 24 (Lrrc24) from Mus musculus (Mouse).